We begin with the raw amino-acid sequence, 108 residues long: Large ribosomal subunit protein P1B (108 aa).

Residues 72 to 84 are compositionally biased toward low complexity; sequence AGSASGAAAGGEA. The interval 72–108 is disordered; sequence AGSASGAAAGGEAAAEEAAEEEAAEESDDDMGFGLFD. A compositionally biased stretch (acidic residues) spans 85-102; that stretch reads AAEEAAEEEAAEESDDDM.

Belongs to the eukaryotic ribosomal protein P1/P2 family. In terms of assembly, P1 and P2 exist as dimers at the large ribosomal subunit. Phosphorylated.

Functionally, plays an important role in the elongation step of protein synthesis. The polypeptide is Large ribosomal subunit protein P1B (RPP1B) (Candida albicans (Yeast)).